The following is a 449-amino-acid chain: Nucleoporin NUP42 (449 aa).

A C3H1-type zinc finger spans residues 1 to 25 (MAICSFFLQGRCRYGEKCWNEHPRG). Disordered stretches follow at residues 22–84 (HPRG…GFDN) and 218–237 (DMTS…SSFP). 2 stretches are compositionally biased toward polar residues: residues 47–83 (WGSS…SGFD) and 218–227 (DMTSGYNGQQ). FG repeat units lie at residues 231-232 (FG), 274-275 (FG), 284-285 (FG), 305-306 (FG), 314-315 (FG), 335-336 (FG), and 347-348 (FG).

As to quaternary structure, probable component of the nuclear pore complex (NPC).

The protein localises to the nucleus. It localises to the nuclear pore complex. It is found in the nucleus membrane. Functionally, required for the export of mRNAs containing poly(A) tails from the nucleus into the cytoplasm. In Xenopus tropicalis (Western clawed frog), this protein is Nucleoporin NUP42 (nup42).